A 146-amino-acid polypeptide reads, in one-letter code: Cytochrome c oxidase assembly factor 1 homolog (146 aa).

The Mitochondrial matrix portion of the chain corresponds to 1 to 14 (MMWQKYAGSRRSMP). The chain crosses the membrane as a helical span at residues 15–37 (LGARILFHGVFYAGGFAIVYYLI). The Mitochondrial intermembrane segment spans residues 38–146 (QKFHSRALYY…GENGDEVKKE (109 aa)).

This sequence belongs to the COA1 family. As to quaternary structure, component of the MITRAC (mitochondrial translation regulation assembly intermediate of cytochrome c oxidase complex) complex, the core components of this complex being COA3/MITRAC12 and COX14. Interacts with COX17 and COA6. Part of the mitochondrial complex I assembly/MCIA complex that comprises at least the core subunits TMEM126B, NDUFAF1, ECSIT and ACAD9 and complement subunits such as COA1 and TMEM186.

Its subcellular location is the mitochondrion inner membrane. In terms of biological role, component of the MITRAC (mitochondrial translation regulation assembly intermediate of cytochrome c oxidase complex) complex, that regulates cytochrome c oxidase assembly. MITRAC complexes regulate both translation of mitochondrial encoded components and assembly of nuclear-encoded components imported in mitochondrion. Required for assembly of mitochondrial respiratory chain complex I and complex IV. As part of the MCIA complex, required for efficient assembly of the mitochondrial complex I. In Homo sapiens (Human), this protein is Cytochrome c oxidase assembly factor 1 homolog.